The chain runs to 481 residues: Dihydrolipoyl dehydrogenase (481 aa).

Residues 34–42 (EREHMGGIC) and Lys-51 contribute to the FAD site. Cys-42 and Cys-47 are joined by a disulfide. NAD(+)-binding positions include 195 to 199 (GSGAI), Glu-218, and 284 to 287 (AVGV). 2 residues coordinate FAD: Asp-326 and Ala-334. His-460 serves as the catalytic Proton acceptor.

It belongs to the class-I pyridine nucleotide-disulfide oxidoreductase family. Homodimer. FAD serves as cofactor.

It is found in the cytoplasm. The enzyme catalyses N(6)-[(R)-dihydrolipoyl]-L-lysyl-[protein] + NAD(+) = N(6)-[(R)-lipoyl]-L-lysyl-[protein] + NADH + H(+). In terms of biological role, lipoamide dehydrogenase is a component of the alpha-ketoacid dehydrogenase complexes. The polypeptide is Dihydrolipoyl dehydrogenase (lpdA) (Rhizobium etli (strain ATCC 51251 / DSM 11541 / JCM 21823 / NBRC 15573 / CFN 42)).